Consider the following 320-residue polypeptide: NAD kinase (320 aa).

Catalysis depends on D96, which acts as the Proton acceptor. Residues 96-97 (DG), R101, 170-171 (NE), D200, and 211-216 (TAYAFS) each bind NAD(+).

The protein belongs to the NAD kinase family. The cofactor is a divalent metal cation.

Its subcellular location is the cytoplasm. The enzyme catalyses NAD(+) + ATP = ADP + NADP(+) + H(+). Functionally, involved in the regulation of the intracellular balance of NAD and NADP, and is a key enzyme in the biosynthesis of NADP. Catalyzes specifically the phosphorylation on 2'-hydroxyl of the adenosine moiety of NAD to yield NADP. The protein is NAD kinase of Rhodococcus opacus (strain B4).